The following is a 603-amino-acid chain: UvrABC system protein C (603 aa).

The GIY-YIG domain maps to 14 to 92 (ELPGVYRMLD…IKSLAPRYNI (79 aa)). The 36-residue stretch at 201–236 (QEVTRRLTKSMEEASAKLAFEQAAVFRDQIQSLHQV) folds into the UVR domain.

It belongs to the UvrC family. Interacts with UvrB in an incision complex.

Its subcellular location is the cytoplasm. Its function is as follows. The UvrABC repair system catalyzes the recognition and processing of DNA lesions. UvrC both incises the 5' and 3' sides of the lesion. The N-terminal half is responsible for the 3' incision and the C-terminal half is responsible for the 5' incision. The chain is UvrABC system protein C from Dechloromonas aromatica (strain RCB).